Reading from the N-terminus, the 255-residue chain is NAD kinase (255 aa).

Aspartate 44 (proton acceptor) is an active-site residue. Residues 44-45 (DG), histidine 49, 114-115 (NE), aspartate 144, alanine 152, 155-160 (SAYNLS), and glutamine 216 each bind NAD(+).

Belongs to the NAD kinase family. A divalent metal cation is required as a cofactor.

The protein localises to the cytoplasm. It catalyses the reaction NAD(+) + ATP = ADP + NADP(+) + H(+). In terms of biological role, involved in the regulation of the intracellular balance of NAD and NADP, and is a key enzyme in the biosynthesis of NADP. Catalyzes specifically the phosphorylation on 2'-hydroxyl of the adenosine moiety of NAD to yield NADP. This is NAD kinase from Rickettsia felis (strain ATCC VR-1525 / URRWXCal2) (Rickettsia azadi).